A 403-amino-acid polypeptide reads, in one-letter code: Phosphopentomutase (403 aa).

Residues Asp-13, Asp-298, His-303, Asp-339, His-340, and His-351 each coordinate Mn(2+).

This sequence belongs to the phosphopentomutase family. It depends on Mn(2+) as a cofactor.

Its subcellular location is the cytoplasm. It carries out the reaction 2-deoxy-alpha-D-ribose 1-phosphate = 2-deoxy-D-ribose 5-phosphate. It catalyses the reaction alpha-D-ribose 1-phosphate = D-ribose 5-phosphate. The protein operates within carbohydrate degradation; 2-deoxy-D-ribose 1-phosphate degradation; D-glyceraldehyde 3-phosphate and acetaldehyde from 2-deoxy-alpha-D-ribose 1-phosphate: step 1/2. Functionally, isomerase that catalyzes the conversion of deoxy-ribose 1-phosphate (dRib-1-P) and ribose 1-phosphate (Rib-1-P) to deoxy-ribose 5-phosphate (dRib-5-P) and ribose 5-phosphate (Rib-5-P), respectively. The protein is Phosphopentomutase of Streptococcus pneumoniae (strain Hungary19A-6).